We begin with the raw amino-acid sequence, 83 residues long: Small ribosomal subunit protein uS15c (83 aa).

It belongs to the universal ribosomal protein uS15 family. As to quaternary structure, part of the 30S ribosomal subunit.

Its subcellular location is the plastid. The protein resides in the chloroplast. The protein is Small ribosomal subunit protein uS15c (rps15) of Fagopyrum esculentum subsp. ancestrale (Wild buckwheat).